Here is a 215-residue protein sequence, read N- to C-terminus: Cytochrome b6 (215 aa).

The helical transmembrane segment at 32 to 52 (IFYCLGGITLTCFLVQVATGF) threads the bilayer. C35 provides a ligand contact to heme c. The heme b site is built by H86 and H100. The next 3 membrane-spanning stretches (helical) occupy residues 90-110 (ASMM…TGGF), 116-136 (LTWV…VTGY), and 186-206 (LHTF…FLMI). 2 residues coordinate heme b: H187 and H202.

This sequence belongs to the cytochrome b family. PetB subfamily. As to quaternary structure, the 4 large subunits of the cytochrome b6-f complex are cytochrome b6, subunit IV (17 kDa polypeptide, PetD), cytochrome f and the Rieske protein, while the 4 small subunits are PetG, PetL, PetM and PetN. The complex functions as a dimer. Heme b is required as a cofactor. The cofactor is heme c.

The protein localises to the plastid. It localises to the chloroplast thylakoid membrane. Its function is as follows. Component of the cytochrome b6-f complex, which mediates electron transfer between photosystem II (PSII) and photosystem I (PSI), cyclic electron flow around PSI, and state transitions. The polypeptide is Cytochrome b6 (Klebsormidium bilatum (Filamentous green alga)).